Here is a 172-residue protein sequence, read N- to C-terminus: Adenine phosphoribosyltransferase (172 aa).

Belongs to the purine/pyrimidine phosphoribosyltransferase family. In terms of assembly, homodimer.

It localises to the cytoplasm. It catalyses the reaction AMP + diphosphate = 5-phospho-alpha-D-ribose 1-diphosphate + adenine. It participates in purine metabolism; AMP biosynthesis via salvage pathway; AMP from adenine: step 1/1. Catalyzes a salvage reaction resulting in the formation of AMP, that is energically less costly than de novo synthesis. This chain is Adenine phosphoribosyltransferase, found in Methanococcus maripaludis (strain DSM 14266 / JCM 13030 / NBRC 101832 / S2 / LL).